The chain runs to 285 residues: Inositol polyphosphate 1-phosphatase (285 aa).

Mg(2+) is bound by residues E68, D106, L108, and D109. 1D-myo-inositol 1,4-bisphosphate-binding residues include D109, G110, T111, S173, G195, S197, and K200. D223 provides a ligand contact to Mg(2+).

Belongs to the inositol monophosphatase superfamily. Monomer. Mg(2+) is required as a cofactor.

The protein resides in the cytoplasm. It carries out the reaction 1D-myo-inositol 1,4-bisphosphate + H2O = 1D-myo-inositol 4-phosphate + phosphate. The catalysed reaction is adenosine 3',5'-bisphosphate + H2O = AMP + phosphate. Its activity is regulated as follows. Partially inhibited by Li(2+). Functionally, catalyzes the hydrolysis of the 1-position phosphate from inositol 1,4-bisphosphate. Is also able to convert 3'(2')-phosphoadenosine 5'-phosphate (PAP) to AMP but with less efficiency. This Entamoeba histolytica (strain ATCC 30459 / HM-1:IMSS / ABRM) protein is Inositol polyphosphate 1-phosphatase.